The sequence spans 278 residues: Orotidine 5'-phosphate decarboxylase (278 aa).

Lysine 96 serves as the catalytic Proton donor.

It belongs to the OMP decarboxylase family. Type 2 subfamily.

It carries out the reaction orotidine 5'-phosphate + H(+) = UMP + CO2. The protein operates within pyrimidine metabolism; UMP biosynthesis via de novo pathway; UMP from orotate: step 2/2. This is Orotidine 5'-phosphate decarboxylase from Salinispora tropica (strain ATCC BAA-916 / DSM 44818 / JCM 13857 / NBRC 105044 / CNB-440).